A 36-amino-acid polypeptide reads, in one-letter code: U-limacoditoxin(7)-Dv63 (36 aa).

Residues 1-19 (MFKPRVILLITIIAVFSEF) form the signal peptide.

The protein belongs to the limacoditoxin-7 family. In terms of tissue distribution, expressed by the venom secretory cell of the spine. The spine is a cuticular structure containing a single large nucleated venom-secreting cell at its base. It is an independent unit capable of producing, storing and injecting venom. On the back of D.vulnerans caterpillars, spines are grouped together by 50 to 100 to form scoli, of which there are eight in D.vulnerans.

The protein resides in the secreted. Its function is as follows. Peptide with insecticidal and antiparasitic activities. Induces irreversible paralysis in D.melanogaster when tested at high doses. It shows a moderate antiparasitic activity against the major pathogenic nematode of ruminants (H.contortus, EC(50)=41.3 uM). Does not show antimicrobial activities. Does not induce increase in intracellular calcium in mouse DRG neurons, suggesting that it does not induce pain. The polypeptide is U-limacoditoxin(7)-Dv63 (Doratifera vulnerans (Mottled cup moth)).